Reading from the N-terminus, the 443-residue chain is COP9 signalosome complex subunit 2 (443 aa).

The interval 1-275 (MSDMEDDFMC…DESGSPRRTT (275 aa)) is mediates interaction with NIF3L1. Residues 254 to 416 (AHTDFFEAFK…QLLELDHQKR (163 aa)) enclose the PCI domain.

This sequence belongs to the CSN2 family. Component of the CSN complex, composed of COPS1/GPS1, COPS2, COPS3, COPS4, COPS5, COPS6, COPS7 (COPS7A or COPS7B), COPS8 and COPS9 isoform 1. In the complex, it probably interacts directly with COPS1, COPS4, COPS5, COPS6 and COPS7 (COPS7A or COPS7B). Specifically interacts with the ligand binding domain of the thyroid receptor (TR). Does not require the presence of thyroid hormone for its interaction. Interacts with CUL1 and CUL2. Interacts with IRF8/ICSBP1 and with nuclear receptors NR2F1 and NR0B1. Interacts with NIF3L1. In terms of processing, phosphorylated by CK2 and PKD kinases.

It localises to the cytoplasm. The protein resides in the nucleus. Essential component of the COP9 signalosome complex (CSN), a complex involved in various cellular and developmental processes. The CSN complex is an essential regulator of the ubiquitin (Ubl) conjugation pathway by mediating the deneddylation of the cullin subunits of SCF-type E3 ligase complexes, leading to decrease the Ubl ligase activity of SCF-type complexes such as SCF, CSA or DDB2. The complex is also involved in phosphorylation of p53/TP53, c-jun/JUN, IkappaBalpha/NFKBIA, ITPK1 and IRF8/ICSBP, possibly via its association with CK2 and PKD kinases. CSN-dependent phosphorylation of TP53 and JUN promotes and protects degradation by the Ubl system, respectively. Involved in early stage of neuronal differentiation via its interaction with NIF3L1. The chain is COP9 signalosome complex subunit 2 (COPS2) from Homo sapiens (Human).